A 672-amino-acid chain; its full sequence is Putative sodium/calcium exchanger 7 (672 aa).

A signal peptide spans M1–A23. The next 12 membrane-spanning stretches (helical) occupy residues V88–A108, V130–A150, L164–L184, I196–Y216, L221–A241, L451–L471, P479–F499, I522–V542, G551–V571, A581–I601, L620–F640, and V649–L669.

The protein belongs to the Ca(2+):cation antiporter (CaCA) (TC 2.A.19) family.

The protein resides in the membrane. This chain is Putative sodium/calcium exchanger 7 (ncx-7), found in Caenorhabditis elegans.